The primary structure comprises 141 residues: Hemoglobin subunit alpha (141 aa).

The 141-residue stretch at 1–141 (VLSPTDKTNV…VSTVLTSKYR (141 aa)) folds into the Globin domain. Ser3 is modified (phosphoserine). Lys7 bears the N6-succinyllysine mark. The residue at position 8 (Thr8) is a Phosphothreonine. Lys11 carries the post-translational modification N6-succinyllysine. Residue Tyr24 is modified to Phosphotyrosine. Ser35 is subject to Phosphoserine. Lys40 is subject to N6-succinyllysine. The residue at position 49 (Ser49) is a Phosphoserine. His58 is a binding site for O2. His87 contacts heme b. The residue at position 102 (Ser102) is a Phosphoserine. At Thr108 the chain carries Phosphothreonine. Ser124 carries the post-translational modification Phosphoserine. A phosphothreonine mark is found at Thr134 and Thr137. At Ser138 the chain carries Phosphoserine.

This sequence belongs to the globin family. As to quaternary structure, heterotetramer of two alpha chains and two beta chains. Red blood cells.

Functionally, involved in oxygen transport from the lung to the various peripheral tissues. Its function is as follows. Hemopressin acts as an antagonist peptide of the cannabinoid receptor CNR1. Hemopressin-binding efficiently blocks cannabinoid receptor CNR1 and subsequent signaling. The sequence is that of Hemoglobin subunit alpha (HBA) from Rhinoceros unicornis (Greater Indian rhinoceros).